Here is a 319-residue protein sequence, read N- to C-terminus: MDTSFFPGNHWLFFSVDLLVFLVGLPLNVMALVVFVNKLRRRPVAVDLLLLNLTISDLLLLLFLPFRIVEAACGMKWILPFIFCPLSGFLFFTTIYLTSLFLMTVSIERFLSVAYPLWYKTRPRLAQAGLVSGICWFLASAHCSVIYVTEYWGNATYSQGTNGTCYLEFREDQLAILLPVRLEMAVVLFMVPLCITSYCYSRLVWILSQGASRRRRKRVMGLLVATLLIFFVCFGPYNMSHVVGYVRGESPTWRSYVLLLSTLNSCIDPLVFYFSSSKFQADFHQLLSRLIRACVPWTQEVSLELKVKNGEEPSKECPS.

Topologically, residues 1–15 (MDTSFFPGNHWLFFS) are extracellular. The chain crosses the membrane as a helical span at residues 16-36 (VDLLVFLVGLPLNVMALVVFV). At 37 to 43 (NKLRRRP) the chain is on the cytoplasmic side. Residues 44–64 (VAVDLLLLNLTISDLLLLLFL) traverse the membrane as a helical segment. At 65 to 98 (PFRIVEAACGMKWILPFIFCPLSGFLFFTTIYLT) the chain is on the extracellular side. A disulfide bridge links Cys-84 with Cys-165. Residues 99–119 (SLFLMTVSIERFLSVAYPLWY) traverse the membrane as a helical segment. Topologically, residues 120–127 (KTRPRLAQ) are cytoplasmic. A helical membrane pass occupies residues 128–148 (AGLVSGICWFLASAHCSVIYV). Residues 149-183 (TEYWGNATYSQGTNGTCYLEFREDQLAILLPVRLE) lie on the Extracellular side of the membrane. The helical transmembrane segment at 184–206 (MAVVLFMVPLCITSYCYSRLVWI) threads the bilayer. Residues 207–218 (LSQGASRRRRKR) lie on the Cytoplasmic side of the membrane. A helical transmembrane segment spans residues 219–239 (VMGLLVATLLIFFVCFGPYNM). The Extracellular portion of the chain corresponds to 240 to 254 (SHVVGYVRGESPTWR). The chain crosses the membrane as a helical span at residues 255-275 (SYVLLLSTLNSCIDPLVFYFS). The Cytoplasmic segment spans residues 276–319 (SSKFQADFHQLLSRLIRACVPWTQEVSLELKVKNGEEPSKECPS).

It belongs to the G-protein coupled receptor 1 family. Expressed in the sympathetic nervous system.

The protein resides in the cell membrane. Its function is as follows. G protein-coupled receptor that is activated by a major product of dietary fiber digestion, the short chain fatty acids (SCFAs), and that plays a role in the regulation of whole-body energy homeostasis and in intestinal immunity. In omnivorous mammals, the short chain fatty acids acetate, propionate and butyrate are produced primarily by the gut microbiome that metabolizes dietary fibers. SCFAs serve as a source of energy but also act as signaling molecules. That G protein-coupled receptor is probably coupled to the pertussis toxin-sensitive, G(i/o)-alpha family of G proteins. Its activation results in the formation of inositol 1,4,5-trisphosphate, the mobilization of intracellular calcium, the phosphorylation of the MAPK3/ERK1 and MAPK1/ERK2 kinases and the inhibition of intracellular cAMP accumulation. Activated by SCFAs and by beta-hydroxybutyrate, a ketone body produced by the liver upon starvation, it inhibits N-type calcium channels and modulates the activity of sympathetic neurons through a signaling cascade involving the beta and gamma subunits of its coupled G protein, phospholipase C and MAP kinases. Thereby, it may regulate energy expenditure through the control of the sympathetic nervous system that controls for instance heart rate. Upon activation by SCFAs accumulating in the intestine, it may also signal to the brain via neural circuits which in turn would regulate intestinal gluconeogenesis. May also control the production of hormones involved in whole-body energy homeostasis. May for instance, regulate blood pressure through renin secretion. May also regulate secretion of the PYY peptide by enteroendocrine cells and control gut motility, intestinal transit rate, and the harvesting of energy from SCFAs produced by gut microbiota. May also indirectly regulate the production of LEP/Leptin, a hormone acting on the CNS to inhibit food intake, in response to the presence of short-chain fatty acids in the intestine. Finally, may also play a role in glucose homeostasis. Besides its role in energy homeostasis, may play a role in intestinal immunity. May mediate the activation of the inflammatory and immune response by SCFAs in the gut, regulating the rapid production of chemokines and cytokines by intestinal epithelial cells. This is Free fatty acid receptor 3 (Ffar3) from Rattus norvegicus (Rat).